The primary structure comprises 460 residues: Muscarinic acetylcholine receptor M1 (460 aa).

The Extracellular segment spans residues 1–22 (MNTSAPPAVSPNITVLAPGKGP). Residues Asn-2 and Asn-12 are each glycosylated (N-linked (GlcNAc...) asparagine). A helical transmembrane segment spans residues 23-48 (WQVAFIGITTGLLSLATVTGNLLVLI). The Cytoplasmic portion of the chain corresponds to 49–62 (SFKVNTELKTVNNY). The helical transmembrane segment at 63–84 (FLLSLACADLIIGTFSMNLYTT) threads the bilayer. At 85-95 (YLLMGHWALGT) the chain is on the extracellular side. A helical transmembrane segment spans residues 96-121 (LACDLWLALDYVASNASVMNLLLISF). Cys-98 and Cys-178 are disulfide-bonded. At 122–142 (DRYFSVTRPLSYRAKRTPRRA) the chain is on the cytoplasmic side. A helical membrane pass occupies residues 143 to 164 (ALMIGLAWLVSFVLWAPAILFW). Residues 165 to 185 (QYLVGERTVLAGQCYIQFLSQ) are Extracellular-facing. A helical membrane pass occupies residues 186-209 (PIITFGTAMAAFYLPVTVMCTLYW). Topologically, residues 210–366 (RIYRETENRA…LVKEKKAART (157 aa)) are cytoplasmic. 3 disordered regions span residues 225-259 (LQGSETPGKGGGSSSSSERSQPGAEGSPETPPGRC), 273-297 (SWKEDEEEDEGSMESLTSSEGEEPG), and 310-351 (EAQA…QLAK). Thr-230 bears the Phosphothreonine mark. The segment covering 238 to 247 (SSSSERSQPG) has biased composition (low complexity). A compositionally biased stretch (basic residues) spans 328–343 (RPTKKGRDRAGKGQKP). Residues 367-390 (LSAILLAFILTWTPYNIMVLVSTF) traverse the membrane as a helical segment. The Extracellular segment spans residues 391–401 (CKDCVPETLWE). Residues 402–420 (LGYWLCYVNSTINPMCYAL) form a helical membrane-spanning segment. Over 421–460 (CNKAFRDTFRLLLLCRWDKRRWRKIPKRPGSVHRTPSRQC) the chain is Cytoplasmic. The residue at position 428 (Thr-428) is a Phosphothreonine. At Ser-451 the chain carries Phosphoserine. The residue at position 455 (Thr-455) is a Phosphothreonine. Position 457 is a phosphoserine (Ser-457).

It belongs to the G-protein coupled receptor 1 family. Muscarinic acetylcholine receptor subfamily. CHRM1 sub-subfamily. Interacts with GPRASP2. Interacts with TMEM147.

The protein localises to the cell membrane. The protein resides in the postsynaptic cell membrane. The muscarinic acetylcholine receptor mediates various cellular responses, including inhibition of adenylate cyclase, breakdown of phosphoinositides and modulation of potassium channels through the action of G proteins. Primary transducing effect is Pi turnover. The chain is Muscarinic acetylcholine receptor M1 (CHRM1) from Macaca mulatta (Rhesus macaque).